Reading from the N-terminus, the 761-residue chain is Mitochondrial intermediate peptidase (761 aa).

Residues 1–37 constitute a mitochondrion transit peptide; it reads MLIQKILLNKEISRLPRILSILNYTGLRWLSGSSGRN. His547 is a Zn(2+) binding site. Glu548 is an active-site residue. Residues His551 and His554 each coordinate Zn(2+).

Belongs to the peptidase M3 family. Zn(2+) serves as cofactor.

Its subcellular location is the mitochondrion matrix. The catalysed reaction is Release of an N-terminal octapeptide as second stage of processing of some proteins imported into the mitochondrion.. Its function is as follows. Cleaves proteins, imported into the mitochondrion, to their mature size. While most mitochondrial precursor proteins are processed to the mature form in one step by mitochondrial processing peptidase (MPP), the sequential cleavage by MIP of an octapeptide after initial processing by MPP is a required step for a subgroup of nuclear-encoded precursor proteins destined for the matrix or the inner membrane. This chain is Mitochondrial intermediate peptidase (OCT1), found in Candida glabrata (strain ATCC 2001 / BCRC 20586 / JCM 3761 / NBRC 0622 / NRRL Y-65 / CBS 138) (Yeast).